The chain runs to 853 residues: WEB family protein At5g16730, chloroplastic (853 aa).

Composition is skewed to low complexity over residues 1-27 and 36-49; these read MASK…PATP and KSET…STTT. The N-terminal 84 residues, 1 to 84, are a transit peptide targeting the chloroplast; it reads MASKTKTSLS…PTPPEKSQAR (84 aa). Disordered stretches follow at residues 1-106, 386-465, 666-765, and 778-820; these read MASK…IKED, KEDL…SKKA, LAKK…SVEV, and KEAF…ALTA. The segment covering 92–101 has biased composition (polar residues); sequence ESPQTTTRLS. Residues 94–670 adopt a coiled-coil conformation; it reads PQTTTRLSQI…LEEAILAKKQ (577 aa). Composition is skewed to basic and acidic residues over residues 402-465, 698-718, and 732-753; these read EVSK…SKKA, NGHR…HEPP, and MEEK…KKDE. Acidic residues predominate over residues 754–763; sequence SQDDDKDDSV. The span at 778–788 shows a compositional bias: basic and acidic residues; sequence KEAFPDKKSEL. S790 carries the post-translational modification Phosphoserine. Positions 797–807 are enriched in basic and acidic residues; sequence SSKIDESDKTS.

It belongs to the WEB family.

It localises to the plastid. The protein resides in the chloroplast. The protein is WEB family protein At5g16730, chloroplastic of Arabidopsis thaliana (Mouse-ear cress).